The sequence spans 282 residues: Pantothenate synthetase (282 aa).

Residue Met-30–His-37 coordinates ATP. The active-site Proton donor is His-37. Gln-61 is a (R)-pantoate binding site. Residue Gln-61 participates in beta-alanine binding. An ATP-binding site is contributed by Gly-147–Asp-150. Gln-153 is a (R)-pantoate binding site. ATP-binding positions include Val-176 and Met-184–Arg-187.

It belongs to the pantothenate synthetase family. In terms of assembly, homodimer.

The protein localises to the cytoplasm. It carries out the reaction (R)-pantoate + beta-alanine + ATP = (R)-pantothenate + AMP + diphosphate + H(+). It functions in the pathway cofactor biosynthesis; (R)-pantothenate biosynthesis; (R)-pantothenate from (R)-pantoate and beta-alanine: step 1/1. Its function is as follows. Catalyzes the condensation of pantoate with beta-alanine in an ATP-dependent reaction via a pantoyl-adenylate intermediate. This Geotalea uraniireducens (strain Rf4) (Geobacter uraniireducens) protein is Pantothenate synthetase.